The primary structure comprises 57 residues: Large ribosomal subunit protein bL32 (57 aa).

It belongs to the bacterial ribosomal protein bL32 family.

In Halothermothrix orenii (strain H 168 / OCM 544 / DSM 9562), this protein is Large ribosomal subunit protein bL32.